The chain runs to 252 residues: Probable transcriptional regulatory protein Cagg_2594 (252 aa).

The span at 1 to 14 (MSGHSKWHTIRRAK) shows a compositional bias: basic residues. The segment at 1–22 (MSGHSKWHTIRRAKSANDQRRG) is disordered.

It belongs to the TACO1 family.

Its subcellular location is the cytoplasm. The protein is Probable transcriptional regulatory protein Cagg_2594 of Chloroflexus aggregans (strain MD-66 / DSM 9485).